Reading from the N-terminus, the 406-residue chain is Purine nucleoside permease (406 aa).

An N-terminal signal peptide occupies residues 1-22 (MKLSTLFTLATTISTLTTFTIA).

Belongs to the NUP family.

With respect to regulation, mammalian nucleoside transport inhibitors dipyridamole and NBMPR inhibit adenosine transport by NUP. In terms of biological role, nucleoside permease that transports adenosine and guanosine. Does not show any transport activities towards cytidine, adenine, guanine, uridine, and uracil. The protein is Purine nucleoside permease of Candida albicans (Yeast).